The following is a 197-amino-acid chain: Small ribosomal subunit protein uS4B (197 aa).

An S4 RNA-binding domain is found at 88 to 150 (SRLDNMVYRM…SRKTEMFVNN (63 aa)).

Belongs to the universal ribosomal protein uS4 family. As to quaternary structure, part of the 30S ribosomal subunit. Contacts protein S5. The interaction surface between S4 and S5 is involved in control of translational fidelity.

In terms of biological role, one of the primary rRNA binding proteins, it binds directly to 16S rRNA where it nucleates assembly of the body of the 30S subunit. Its function is as follows. With S5 and S12 plays an important role in translational accuracy. This Clostridium perfringens (strain 13 / Type A) protein is Small ribosomal subunit protein uS4B (rpsD2).